Consider the following 41-residue polypeptide: Large ribosomal subunit protein bL36 (41 aa).

This sequence belongs to the bacterial ribosomal protein bL36 family.

This chain is Large ribosomal subunit protein bL36, found in Beijerinckia indica subsp. indica (strain ATCC 9039 / DSM 1715 / NCIMB 8712).